Reading from the N-terminus, the 132-residue chain is UPF0299 membrane protein Ent638_2744 (132 aa).

Helical transmembrane passes span 8-28 (VWQYLRAFILIYACLYAGIFI), 31-51 (LLPITIPGSIIGMLIMFLLLA), 63-83 (GCFVLIRYMALLFVPIGVGVM), and 93-113 (FGPIVVSCAISTLVVFLVVSW).

Belongs to the UPF0299 family.

It localises to the cell inner membrane. This chain is UPF0299 membrane protein Ent638_2744, found in Enterobacter sp. (strain 638).